Consider the following 327-residue polypeptide: MFSFLCLVELALPMSKTLVDSYGRRIRKLRVSLTDQCNLRCHYCMPVDAIFLEQSSYLSCQEYGEIIGELIALGLEEVRLTGGEPLLRRNFTEIVRAIGQLKLKKIGLTTNGIVLDRHLDTLGENNVLDLNVSLDSLNAKTFSEITHRNCLNTILRNLELASRQGFKIKLNTVVMREINDREIFDLIEYAKRWEMEIRFLEIMRIGYACRHQEKTFISAQELLAKIQQKYSLKPIQSALDATAFRYSTSCGGIIGFIASESQPFCGHCSRWRLSVDGTLRACLLKNEGINIRNFSSLERQHVYQQLLGMKPYLRPPEVSHAMHQIGG.

One can recognise a Radical SAM core domain in the interval 21-233 (SYGRRIRKLR…AKIQQKYSLK (213 aa)). Residue Arg-30 participates in GTP binding. The [4Fe-4S] cluster site is built by Cys-37 and Cys-41. Tyr-43 is an S-adenosyl-L-methionine binding site. Cys-44 provides a ligand contact to [4Fe-4S] cluster. Position 79 (Arg-79) interacts with GTP. Gly-83 lines the S-adenosyl-L-methionine pocket. Thr-109 contributes to the GTP binding site. Residue Ser-133 participates in S-adenosyl-L-methionine binding. Lys-169 contacts GTP. Residue Met-203 coordinates S-adenosyl-L-methionine. Positions 265 and 268 each coordinate [4Fe-4S] cluster. 270–272 (RWR) lines the GTP pocket. Cys-282 is a [4Fe-4S] cluster binding site.

The protein belongs to the radical SAM superfamily. MoaA family. As to quaternary structure, monomer and homodimer. [4Fe-4S] cluster serves as cofactor.

The catalysed reaction is GTP + AH2 + S-adenosyl-L-methionine = (8S)-3',8-cyclo-7,8-dihydroguanosine 5'-triphosphate + 5'-deoxyadenosine + L-methionine + A + H(+). The protein operates within cofactor biosynthesis; molybdopterin biosynthesis. Catalyzes the cyclization of GTP to (8S)-3',8-cyclo-7,8-dihydroguanosine 5'-triphosphate. The protein is GTP 3',8-cyclase of Synechocystis sp. (strain ATCC 27184 / PCC 6803 / Kazusa).